The chain runs to 615 residues: MASNVFDHPLQELEGEDNGVKSEKASLLETSGSVDTTPEDSGHRSSDGHRGLDHCETAPVGLYGDMLINDSEIQYSRSLTEKGSPAIHNLKLDRLSEQEKQKLIVELVRIQNDGTVEVIDNGTPVSELWEFEPTKGQSTITYEKSLTESFRSIPRLKIAILVVGTRGDVQPFLAMAKRLQEFGHRVRLATHANFRSFVRAAGVEFYPLGGDPRELAAYMARNKGLIPSGPSEISKQRKQLKAIIESLLPACIEPDLETATSFRAQAIIANPPAYGHVHVAEALGVPIHIFFTMPWTPTNEFPHPLARVPQSAAYWLSYIVVDLMVWWSIRTYINDFRKRKLNLAPIAYFSTYHGSISHLPTGYMWSPHVVPKPSDWGPLVDVVGYCFLNLGSKYQPREEFLHWIERGSPPVYIGFGSMPLDDPKQTMDIILETLKDTEQRGIVDRGWGGLGNLATEVPENVFLVEDCPHDWLFPQCSAVVHHGGAGTTATGLKAGCPTTIVPFFGDQFFWGDRIYEKGLGPAPIPIAQLSVENLSSSIRFMLQPEVKSQVMELAKVLENEDGVAAAVDAFHRHLPPELPLPESSSEKKDEDDRPDLLQWFFIQIGKKCCLPCGGV.

The disordered stretch occupies residues methionine 1–histidine 54. The span at aspartate 40–histidine 54 shows a compositional bias: basic and acidic residues.

It belongs to the glycosyltransferase 28 family. As to expression, expressed in developing seeds, seedlings, leaves and around the apical tip of cotyledons. In embryo, expressed in the seed coat and cotyledons.

It carries out the reaction a sterol + UDP-alpha-D-glucose = a sterol 3-beta-D-glucoside + UDP + H(+). Its function is as follows. Involved in the biosynthesis of sterol glucosides. Catalyzes the synthesis of steryl glycosides (SGs) and acyl steryl glycosides (ASGs) which are the most abundant sterol derivatives in higher plants. Can act on several sterols like sitosterol, campesterol and stigmasterol. Is required for embryonic development, seed suberin accumulation, cutin formation and flavanoid accumulation in the seed coat. Both UGT80A2 and UGT80B1 are required for the normal production of SGs and ASGs in seeds. The protein is Sterol 3-beta-glucosyltransferase UGT80B1 of Arabidopsis thaliana (Mouse-ear cress).